We begin with the raw amino-acid sequence, 268 residues long: GTP cyclohydrolase 1 type 2 homolog (268 aa).

A divalent metal cation is bound by residues His-66, His-67, Asp-105, His-227, and Glu-231.

The protein belongs to the GTP cyclohydrolase I type 2/NIF3 family. As to quaternary structure, homohexamer.

In Clostridium acetobutylicum (strain ATCC 824 / DSM 792 / JCM 1419 / IAM 19013 / LMG 5710 / NBRC 13948 / NRRL B-527 / VKM B-1787 / 2291 / W), this protein is GTP cyclohydrolase 1 type 2 homolog.